The chain runs to 338 residues: DNA-directed RNA polymerase subunit alpha (338 aa).

The tract at residues 1–226 is alpha N-terminal domain (alpha-NTD); the sequence is MLIAQRPTLT…ELFGLTRELN (226 aa). Positions 243–338 are alpha C-terminal domain (alpha-CTD); sequence YAESLGTPVE…DDDYAETEQY (96 aa). The interval 319-338 is disordered; the sequence is AAAEAYDEANDDDYAETEQY. Residues 323–338 show a composition bias toward acidic residues; sequence AYDEANDDDYAETEQY.

The protein belongs to the RNA polymerase alpha chain family. In terms of assembly, homodimer. The RNAP catalytic core consists of 2 alpha, 1 beta, 1 beta' and 1 omega subunit. When a sigma factor is associated with the core the holoenzyme is formed, which can initiate transcription.

The enzyme catalyses RNA(n) + a ribonucleoside 5'-triphosphate = RNA(n+1) + diphosphate. In terms of biological role, DNA-dependent RNA polymerase catalyzes the transcription of DNA into RNA using the four ribonucleoside triphosphates as substrates. The sequence is that of DNA-directed RNA polymerase subunit alpha from Cutibacterium acnes (strain DSM 16379 / KPA171202) (Propionibacterium acnes).